A 152-amino-acid polypeptide reads, in one-letter code: Ribosomal RNA large subunit methyltransferase H (152 aa).

S-adenosyl-L-methionine contacts are provided by residues Leu-65, Gly-96, and Leu-115 to Trp-120.

The protein belongs to the RNA methyltransferase RlmH family. As to quaternary structure, homodimer.

It localises to the cytoplasm. The catalysed reaction is pseudouridine(1915) in 23S rRNA + S-adenosyl-L-methionine = N(3)-methylpseudouridine(1915) in 23S rRNA + S-adenosyl-L-homocysteine + H(+). Functionally, specifically methylates the pseudouridine at position 1915 (m3Psi1915) in 23S rRNA. The sequence is that of Ribosomal RNA large subunit methyltransferase H from Gluconacetobacter diazotrophicus (strain ATCC 49037 / DSM 5601 / CCUG 37298 / CIP 103539 / LMG 7603 / PAl5).